The sequence spans 141 residues: Hemoglobin subunit alpha-D (141 aa).

The Globin domain maps to 1–141 (VLTGEDKKHV…VAAVLAEKYR (141 aa)). Heme b-binding residues include His-58 and His-87.

It belongs to the globin family. In terms of assembly, heterotetramer of two alpha-D chains and two beta chains. In terms of tissue distribution, red blood cells.

Involved in oxygen transport from the lung to the various peripheral tissues. This chain is Hemoglobin subunit alpha-D (HBAD), found in Turdus merula (Common blackbird).